The primary structure comprises 316 residues: Aprataxin (316 aa).

Residues 1 to 38 enclose the FHA-like domain; the sequence is HASARGEGFLLLKADCNKGYVTVKQIGVNPTSVDLVDV. The segment at 104–142 is disordered; the sequence is KKMEVVDTQSSSADLRPSKSSVSPHEGTTSRKEHLGHWS. Residues 110–130 are compositionally biased toward polar residues; sequence DTQSSSADLRPSKSSVSPHEG. Residues 142–247 enclose the HIT domain; the sequence is SQGLKSSMQD…ISQDFDSPAL (106 aa). Interaction with DNA substrate regions lie at residues 167-171 and 229-230; these read DKYPK and SM. Positions 232–236 match the Histidine triad motif motif; that stretch reads QLHLH. The Tele-AMP-histidine intermediate role is filled by His234. Residues 291 to 313 form a C2H2-type zinc finger; sequence LRCHLCKQQLSTIPQLKEHLKKH.

Its subcellular location is the nucleus. The protein resides in the nucleoplasm. The protein localises to the nucleolus. The catalysed reaction is a 5'-end adenosine-5'-diphospho-5'-2'-deoxyribonucleoside-DNA + H2O = a 5'-end 5'-phospho-2'-deoxyribonucleoside-DNA + AMP + 2 H(+). It carries out the reaction a 5'-end adenosine-5'-diphospho-5'-ribonucleoside-2'-deoxyribonucleotide-DNA + H2O = a 5'-end 5'-phospho-ribonucleoside-2'-deoxyribonucleotide-DNA + AMP + 2 H(+). The enzyme catalyses a 3'-end 2'-deoxyribonucleotide-3'-diphospho-5'-guanosine-DNA + H2O = a 3'-end 2'-deoxyribonucleotide 3'-phosphate-DNA + GMP + 2 H(+). Functionally, DNA-binding protein involved in single-strand DNA break repair, double-strand DNA break repair and base excision repair. Resolves abortive DNA ligation intermediates formed either at base excision sites, or when DNA ligases attempt to repair non-ligatable breaks induced by reactive oxygen species. Catalyzes the release of adenylate groups covalently linked to 5'-phosphate termini, resulting in the production of 5'-phosphate termini that can be efficiently rejoined. Also able to hydrolyze adenosine 5'-monophosphoramidate (AMP-NH(2)) and diadenosine tetraphosphate (AppppA), but with lower catalytic activity. Likewise, catalyzes the release of 3'-linked guanosine (DNAppG) and inosine (DNAppI) from DNA, but has higher specific activity with 5'-linked adenosine (AppDNA). In Gallus gallus (Chicken), this protein is Aprataxin (APTX).